Consider the following 131-residue polypeptide: Large ribosomal subunit protein bL17 (131 aa).

The protein belongs to the bacterial ribosomal protein bL17 family. Part of the 50S ribosomal subunit. Contacts protein L32.

In Bordetella avium (strain 197N), this protein is Large ribosomal subunit protein bL17.